The following is a 428-amino-acid chain: Enolase (428 aa).

Glutamine 163 lines the (2R)-2-phosphoglycerate pocket. Glutamate 205 functions as the Proton donor in the catalytic mechanism. Mg(2+)-binding residues include aspartate 242, glutamate 283, and aspartate 310. The (2R)-2-phosphoglycerate site is built by lysine 335, arginine 364, serine 365, and lysine 386. Catalysis depends on lysine 335, which acts as the Proton acceptor.

It belongs to the enolase family. Mg(2+) is required as a cofactor.

The protein localises to the cytoplasm. It is found in the secreted. Its subcellular location is the cell surface. The enzyme catalyses (2R)-2-phosphoglycerate = phosphoenolpyruvate + H2O. It participates in carbohydrate degradation; glycolysis; pyruvate from D-glyceraldehyde 3-phosphate: step 4/5. In terms of biological role, catalyzes the reversible conversion of 2-phosphoglycerate (2-PG) into phosphoenolpyruvate (PEP). It is essential for the degradation of carbohydrates via glycolysis. The protein is Enolase of Saccharopolyspora erythraea (strain ATCC 11635 / DSM 40517 / JCM 4748 / NBRC 13426 / NCIMB 8594 / NRRL 2338).